We begin with the raw amino-acid sequence, 419 residues long: Serine hydroxymethyltransferase (419 aa).

(6S)-5,6,7,8-tetrahydrofolate-binding positions include Leu119 and 123-125 (GHL). Position 228 is an N6-(pyridoxal phosphate)lysine (Lys228).

The protein belongs to the SHMT family. As to quaternary structure, homodimer. It depends on pyridoxal 5'-phosphate as a cofactor.

The protein localises to the cytoplasm. It carries out the reaction (6R)-5,10-methylene-5,6,7,8-tetrahydrofolate + glycine + H2O = (6S)-5,6,7,8-tetrahydrofolate + L-serine. The protein operates within one-carbon metabolism; tetrahydrofolate interconversion. It participates in amino-acid biosynthesis; glycine biosynthesis; glycine from L-serine: step 1/1. Its function is as follows. Catalyzes the reversible interconversion of serine and glycine with tetrahydrofolate (THF) serving as the one-carbon carrier. This reaction serves as the major source of one-carbon groups required for the biosynthesis of purines, thymidylate, methionine, and other important biomolecules. Also exhibits THF-independent aldolase activity toward beta-hydroxyamino acids, producing glycine and aldehydes, via a retro-aldol mechanism. The chain is Serine hydroxymethyltransferase from Desulfosudis oleivorans (strain DSM 6200 / JCM 39069 / Hxd3) (Desulfococcus oleovorans).